A 122-amino-acid polypeptide reads, in one-letter code: MIQPQSRLKVADNTGAKEVMCIRVLGGSNRKFANIGDIIVCSVKDATPGGVVKKGDVVKAVIVRTRKGIRREDGTYIRFDDNAAVLIREDKTPRGTRIFGPVARELRDKDFMKIVSLAPEVL.

The protein belongs to the universal ribosomal protein uL14 family. Part of the 50S ribosomal subunit. Forms a cluster with proteins L3 and L19. In the 70S ribosome, L14 and L19 interact and together make contacts with the 16S rRNA in bridges B5 and B8.

Its function is as follows. Binds to 23S rRNA. Forms part of two intersubunit bridges in the 70S ribosome. In Caldicellulosiruptor saccharolyticus (strain ATCC 43494 / DSM 8903 / Tp8T 6331), this protein is Large ribosomal subunit protein uL14.